A 330-amino-acid chain; its full sequence is Complement factor H-related protein 3 (330 aa).

Positions 1–18 (MLLLINVILTLWVSCANG) are cleaved as a signal peptide. Sushi domains follow at residues 22–84 (PCDF…VPCL), 85–142 (RKCY…RCIR), 144–205 (RTCS…ICIN), 208–266 (EKCG…RCIH), and 267–330 (PCII…PRCE). 6 disulfide bridges follow: C23–C72, C55–C83, C87–C129, C114–C140, C146–C192, and C175–C203. An N-linked (GlcNAc...) asparagine glycan is attached at N108. N185 and N205 each carry an N-linked (GlcNAc...) asparagine glycan. 4 disulfides stabilise this stretch: C210/C253, C239/C264, C268/C319, and C302/C329. N-linked (GlcNAc...) asparagine glycosylation is present at N309.

Expressed by the liver and secreted in plasma.

The protein resides in the secreted. Functionally, might be involved in complement regulation. The chain is Complement factor H-related protein 3 (CFHR3) from Homo sapiens (Human).